Reading from the N-terminus, the 156-residue chain is Transcriptional repressor NrdR (156 aa).

The segment at 3–34 (CPYCGHLDNKVIDSRINKDATITRRRRSCLAC) is a zinc-finger region. Residues 49–139 (PMLVKKDGRR…VYRQFKDVDE (91 aa)) form the ATP-cone domain.

It belongs to the NrdR family. Requires Zn(2+) as cofactor.

Functionally, negatively regulates transcription of bacterial ribonucleotide reductase nrd genes and operons by binding to NrdR-boxes. The polypeptide is Transcriptional repressor NrdR (Desulfotalea psychrophila (strain LSv54 / DSM 12343)).